A 79-amino-acid polypeptide reads, in one-letter code: U-actitoxin-Oulsp1 (79 aa).

Positions 1 to 21 (MNTKLVVVFLLSAILFVSVTA) are cleaved as a signal peptide. Positions 22 to 43 (SRPGKDLERDEAYETYDDENKR) are excised as a propeptide. The region spanning 45–79 (CKDVFPAATCRHAKSVGNCSSEKYKRNCAITCGAC) is the ShKT domain. Cystine bridges form between C45–C79, C54–C72, and C63–C76. Residues 67–68 (KY) form a crucial for binding to potassium channels region.

It belongs to the sea anemone type 1 potassium channel toxin family. Type 1b subfamily. Post-translationally, two similar peptides (OspTx2a-p1 and -p2) are obtained after synthesis and oxidative folding. They may differ by a D-Cys at position 76 (corresponding to OspTx2a-p2). Since C-terminal Cys residues are prone to racemization during solid-phase peptide synthesis, and if the presence of a D-amino acid is correct, it is probable that OspTx2a-p1 (L-Cys-76 form) corresponds to the native peptide.

The protein localises to the secreted. In terms of biological role, toxin that weakly blocks the two voltage-gated potassium channels on Kv1.2/KCNA2 (IC(50)=1.8-2.5 uM) and Kv1.6/KCNA6 (IC(50)=5.6-6.2 uM). The polypeptide is U-actitoxin-Oulsp1 (Oulactis sp. (Sea anemone)).